The sequence spans 596 residues: Elongation factor 4 (596 aa).

The 182-residue stretch at 2-183 folds into the tr-type G domain; it reads KNIRNFSIIA…AIVDRIPAPV (182 aa). GTP contacts are provided by residues 14–19 and 130–133; these read DHGKST and NKID.

This sequence belongs to the TRAFAC class translation factor GTPase superfamily. Classic translation factor GTPase family. LepA subfamily.

Its subcellular location is the cell inner membrane. The catalysed reaction is GTP + H2O = GDP + phosphate + H(+). Its function is as follows. Required for accurate and efficient protein synthesis under certain stress conditions. May act as a fidelity factor of the translation reaction, by catalyzing a one-codon backward translocation of tRNAs on improperly translocated ribosomes. Back-translocation proceeds from a post-translocation (POST) complex to a pre-translocation (PRE) complex, thus giving elongation factor G a second chance to translocate the tRNAs correctly. Binds to ribosomes in a GTP-dependent manner. In Sulfurimonas denitrificans (strain ATCC 33889 / DSM 1251) (Thiomicrospira denitrificans (strain ATCC 33889 / DSM 1251)), this protein is Elongation factor 4.